Here is a 573-residue protein sequence, read N- to C-terminus: Flagellin B (573 aa).

This sequence belongs to the bacterial flagellin family. As to quaternary structure, heteromer of FlaA and FlaB. A flagellar filament composed exclusively of FlaA is indistinguishable in length from that of the wild-type and shows a slight reduction in motility. The flagellar filament composed exclusively of the FlaB is severely truncated in length and greatly reduced in motility. Thus, while both flagellins are not necessary for motility, both are required for a fully active flagellar filament.

The protein localises to the secreted. It localises to the bacterial flagellum. Its function is as follows. Flagellin is the subunit protein which polymerizes to form the filaments of bacterial flagella. This is Flagellin B (flaB) from Campylobacter coli.